Consider the following 627-residue polypeptide: DNA-directed RNA polymerase subunit gamma (627 aa).

4 residues coordinate Zn(2+): Cys-70, Cys-72, Cys-85, and Cys-88. Mg(2+) contacts are provided by Asp-468, Asp-470, and Asp-472.

This sequence belongs to the RNA polymerase beta' chain family. RpoC1 subfamily. In terms of assembly, in cyanobacteria the RNAP catalytic core is composed of 2 alpha, 1 beta, 1 beta', 1 gamma and 1 omega subunit. When a sigma factor is associated with the core the holoenzyme is formed, which can initiate transcription. Mg(2+) serves as cofactor. Zn(2+) is required as a cofactor.

It catalyses the reaction RNA(n) + a ribonucleoside 5'-triphosphate = RNA(n+1) + diphosphate. In terms of biological role, DNA-dependent RNA polymerase catalyzes the transcription of DNA into RNA using the four ribonucleoside triphosphates as substrates. This Synechococcus sp. (strain JA-2-3B'a(2-13)) (Cyanobacteria bacterium Yellowstone B-Prime) protein is DNA-directed RNA polymerase subunit gamma.